We begin with the raw amino-acid sequence, 295 residues long: HTH-type transcriptional activator IlvY (295 aa).

An HTH lysR-type domain is found at 1–58 (MDLRDLKTFLHLAESRHFGRSARAMHVSPSTLSRQIQRLEEDLGQPLFVRDNRTVTLT). Residues 18–37 (FGRSARAMHVSPSTLSRQIQ) constitute a DNA-binding region (H-T-H motif).

Belongs to the LysR transcriptional regulatory family.

The protein localises to the cytoplasm. In terms of biological role, this protein activates the transcription of the IlvC gene in the presence of acetolactate or acetohydroxybutyrate. IlvY is also a negative regulator of its own expression. This Salmonella typhi protein is HTH-type transcriptional activator IlvY (ilvY).